Consider the following 500-residue polypeptide: E3 ubiquitin-protein ligase TRIM69 (500 aa).

The necessary for nuclear localization stretch occupies residues 1 to 152 (MEVSTNPSSN…SVGQSKEFLQ (152 aa)). An RING-type zinc finger spans residues 41 to 82 (CPLCNDWFRDPLMLSCGHNFCEACIQDFWRLQAKETFCPECK). Residues 161 to 255 (TEELAIQQGQ…QCLLAKDMLV (95 aa)) are a coiled coil. Residues 305-500 (PIQYMVWREM…KEPLHILHPQ (196 aa)) enclose the B30.2/SPRY domain. Ser-341 is modified (phosphoserine).

The protein belongs to the TRIM/RBCC family. In terms of assembly, homo-multimer; required for antiviral activity. Interacts with PML. In terms of processing, phosphorylated. Phosphorylation is necessary for nuclear localization.

Its subcellular location is the cytoplasm. The protein localises to the nucleus. The protein resides in the nucleus speckle. It localises to the cytoskeleton. It is found in the microtubule organizing center. Its subcellular location is the centrosome. The enzyme catalyses S-ubiquitinyl-[E2 ubiquitin-conjugating enzyme]-L-cysteine + [acceptor protein]-L-lysine = [E2 ubiquitin-conjugating enzyme]-L-cysteine + N(6)-ubiquitinyl-[acceptor protein]-L-lysine.. It participates in protein modification; protein ubiquitination. In terms of biological role, E3 ubiquitin ligase that plays an important role in antiviral immunity by restricting different viral infections including dengue virus or vesicular stomatitis indiana virus. Ubiquitinates viral proteins such as dengue virus NS3 thereby limiting infection. In addition, acts as a key mediator of type I interferon induced microtubule stabilization by directly associating to microtubules independently of its E3 ligase activity. Also plays a role in cataract formation together with TP53. Mechanistically, inhibits UVB-induced cell apoptosis and reactive oxygen species (ROS) production by inducing TP53 ubiquitination. Regulates centrosome dynamics and mitotic progression by ubiquitinating STK3/MST2; leading to its redistribution to the perinuclear cytoskeleton and subsequent phosphorylation by PLK1. This is E3 ubiquitin-protein ligase TRIM69 (TRIM69) from Homo sapiens (Human).